Here is a 235-residue protein sequence, read N- to C-terminus: Meiotically up-regulated gene 123 protein (235 aa).

A compositionally biased stretch (basic and acidic residues) spans 1 to 14; sequence MERLATRSSHDDPY. Disordered regions lie at residues 1–34, 58–83, and 169–235; these read MERL…SNGS, PLHS…GGMR, and SRAD…FDSD. The span at 15-34 shows a compositional bias: polar residues; that stretch reads SRSSLPTSNAINSNHESNGS. Low complexity predominate over residues 61-77; it reads SSPSIKSSSQNGKSSSK. Over residues 176 to 202 the composition is skewed to polar residues; that stretch reads ETTQSDGFESRSGSPTHDIQSYLVNRR. Phosphoserine occurs at positions 180, 187, and 189. Phosphothreonine is present on threonine 191.

It localises to the cytoplasm. The protein resides in the nucleus. Its function is as follows. Involved in sporulation and has a role in meiosis. This is Meiotically up-regulated gene 123 protein (mug123) from Schizosaccharomyces pombe (strain 972 / ATCC 24843) (Fission yeast).